A 337-amino-acid chain; its full sequence is Inositol 2-dehydrogenase (337 aa).

It belongs to the Gfo/Idh/MocA family. Homotetramer.

The enzyme catalyses myo-inositol + NAD(+) = scyllo-inosose + NADH + H(+). Functionally, involved in the oxidation of myo-inositol (MI) to 2-keto-myo-inositol (2KMI or 2-inosose). The sequence is that of Inositol 2-dehydrogenase from Arthrobacter sp. (strain FB24).